The sequence spans 313 residues: NADH-ubiquinone oxidoreductase chain 1 (313 aa).

10 helical membrane-spanning segments follow: residues 6–26, 31–51, 62–82, 84–104, 109–129, 142–162, 183–203, 216–235, 250–270, and 286–306; these read IIIIIIIDILVVLILTGFVSL, ILALVQIRIGPALCFFGILTP, FIIFVISFDIIYLIGAMIITA, CIFLGWFYFPIGFILLLDTGF, MLCVHVFCSMFSTFFVGCFLF, MFFSIISESGIFLLYTTIYSL, FYIAGVLFISVFWVSMLLDGL, LVAGLITELSGFFFVLYSVL, LCFGGLFICFKAILILIFGFF, and AFILIFLFYMCVLMFIWLFTT.

Belongs to the complex I subunit 1 family.

The protein localises to the mitochondrion inner membrane. The enzyme catalyses a ubiquinone + NADH + 5 H(+)(in) = a ubiquinol + NAD(+) + 4 H(+)(out). In terms of biological role, core subunit of the mitochondrial membrane respiratory chain NADH dehydrogenase (Complex I) that is believed to belong to the minimal assembly required for catalysis. Complex I functions in the transfer of electrons from NADH to the respiratory chain. The immediate electron acceptor for the enzyme is believed to be ubiquinone. The protein is NADH-ubiquinone oxidoreductase chain 1 (ND1) of Leishmania tarentolae (Sauroleishmania tarentolae).